Reading from the N-terminus, the 525-residue chain is GMP synthase [glutamine-hydrolyzing] (525 aa).

Residues 8–207 (KILILDFGSQ…ALDICGCKAN (200 aa)) form the Glutamine amidotransferase type-1 domain. Cys-85 acts as the Nucleophile in catalysis. Catalysis depends on residues His-181 and Glu-183. One can recognise a GMPS ATP-PPase domain in the interval 208–400 (WKPSSIIEDA…LGLPYNMLYR (193 aa)). 235-241 (SGGVDSS) contacts ATP.

As to quaternary structure, homodimer.

The enzyme catalyses XMP + L-glutamine + ATP + H2O = GMP + L-glutamate + AMP + diphosphate + 2 H(+). The protein operates within purine metabolism; GMP biosynthesis; GMP from XMP (L-Gln route): step 1/1. Functionally, catalyzes the synthesis of GMP from XMP. This is GMP synthase [glutamine-hydrolyzing] from Shewanella frigidimarina (strain NCIMB 400).